The primary structure comprises 293 residues: 4-diphosphocytidyl-2-C-methyl-D-erythritol kinase (293 aa).

The active site involves lysine 16. 99 to 109 (PMGAGLGGGSS) is a binding site for ATP. Aspartate 141 is a catalytic residue.

Belongs to the GHMP kinase family. IspE subfamily.

The enzyme catalyses 4-CDP-2-C-methyl-D-erythritol + ATP = 4-CDP-2-C-methyl-D-erythritol 2-phosphate + ADP + H(+). Its pathway is isoprenoid biosynthesis; isopentenyl diphosphate biosynthesis via DXP pathway; isopentenyl diphosphate from 1-deoxy-D-xylulose 5-phosphate: step 3/6. Functionally, catalyzes the phosphorylation of the position 2 hydroxy group of 4-diphosphocytidyl-2C-methyl-D-erythritol. In Burkholderia orbicola (strain MC0-3), this protein is 4-diphosphocytidyl-2-C-methyl-D-erythritol kinase.